A 187-amino-acid polypeptide reads, in one-letter code: PBAN-type neuropeptides (187 aa).

The N-terminal stretch at 1–22 (MSRFYFFFNLICLYLAIKSALS) is a signal peptide. A propeptide spanning residues 23–64 (AELDTNDQKYADLRTTGRGESPDSTGPDSDTLRRDDGAEGLN) is cleaved from the precursor. The span at 34-43 (DLRTTGRGES) shows a compositional bias: basic and acidic residues. A disordered region spans residues 34 to 58 (DLRTTGRGESPDSTGPDSDTLRRDD). The residue at position 76 (Leu76) is a Leucine amide. The propeptide occupies 80-127 (TIAADLHDDLVEEFDAEPLGYAGEPPQKLATELVQGAPYMVLLVTAKP). The interval 132–163 (PIFYHTTSPRLGRRDSVGENHQRPPFAPRLGR) is disordered. Residue Leu142 is modified to Leucine amide. The span at 143–153 (GRRDSVGENHQ) shows a compositional bias: basic and acidic residues. A leucine amide mark is found at Leu161 and Leu171. Residues 174 to 187 (SYNGGYPLPFQFAY) constitute a propeptide that is removed on maturation.

The protein belongs to the pyrokinin family.

Its subcellular location is the secreted. In terms of biological role, a hormone that controls sex pheromone production in females and pheromone responsiveness in male. Also mediates visceral muscle contractile activity (myotropic activity). The protein is PBAN-type neuropeptides of Anopheles gambiae (African malaria mosquito).